Reading from the N-terminus, the 421-residue chain is 4-hydroxy-3-methylbut-2-en-1-yl diphosphate synthase (flavodoxin) (421 aa).

[4Fe-4S] cluster is bound by residues C298, C301, C344, and E351.

This sequence belongs to the IspG family. Requires [4Fe-4S] cluster as cofactor.

The enzyme catalyses (2E)-4-hydroxy-3-methylbut-2-enyl diphosphate + oxidized [flavodoxin] + H2O + 2 H(+) = 2-C-methyl-D-erythritol 2,4-cyclic diphosphate + reduced [flavodoxin]. It functions in the pathway isoprenoid biosynthesis; isopentenyl diphosphate biosynthesis via DXP pathway; isopentenyl diphosphate from 1-deoxy-D-xylulose 5-phosphate: step 5/6. Functionally, converts 2C-methyl-D-erythritol 2,4-cyclodiphosphate (ME-2,4cPP) into 1-hydroxy-2-methyl-2-(E)-butenyl 4-diphosphate. The protein is 4-hydroxy-3-methylbut-2-en-1-yl diphosphate synthase (flavodoxin) of Neisseria meningitidis serogroup C / serotype 2a (strain ATCC 700532 / DSM 15464 / FAM18).